The sequence spans 923 residues: Lysosomal acid alpha-glucosidase (923 aa).

The signal sequence occupies residues 1-17; that stretch reads MKHQVLLPLLVTTAIIA. The propeptide occupies 18 to 36; the sequence is GSVGVYTHSKPLLGQSQDQ. N65, N405, and N440 each carry an N-linked (GlcNAc...) asparagine glycan. The active-site Nucleophile is D455. Residue E458 is part of the active site. The Proton donor role is filled by D585. 6 N-linked (GlcNAc...) asparagine glycosylation sites follow: N586, N621, N646, N848, N908, and N912.

This sequence belongs to the glycosyl hydrolase 31 family.

The protein resides in the lysosome. It localises to the secreted. It catalyses the reaction Hydrolysis of terminal, non-reducing (1-&gt;4)-linked alpha-D-glucose residues with release of alpha-D-glucose.. In terms of biological role, essential for the degradation of glycogen to glucose in lysosomes. Has both alpha-1,4 and alpha-1,6-glucosidase activity. This chain is Lysosomal acid alpha-glucosidase, found in Tetrahymena pyriformis.